Consider the following 92-residue polypeptide: MAKGQSLQDPFLNALRRERVPVSIYLVNGIKLQGQVESFDQFVILLKNTVSQMVYKHAISTVVPARPFNVSSHHNTPNQAAGYNASHDDSAE.

One can recognise a Sm domain in the interval 9 to 68 (DPFLNALRRERVPVSIYLVNGIKLQGQVESFDQFVILLKNTVSQMVYKHAISTVVPARPF). Positions 68–92 (FNVSSHHNTPNQAAGYNASHDDSAE) are disordered. Positions 69–81 (NVSSHHNTPNQAA) are enriched in polar residues.

The protein belongs to the Hfq family. As to quaternary structure, homohexamer.

RNA chaperone that binds small regulatory RNA (sRNAs) and mRNAs to facilitate mRNA translational regulation in response to envelope stress, environmental stress and changes in metabolite concentrations. Also binds with high specificity to tRNAs. This is RNA-binding protein Hfq from Shewanella loihica (strain ATCC BAA-1088 / PV-4).